The chain runs to 68 residues: Small integral membrane protein 10-like protein 1 (68 aa).

A disordered region spans residues 1 to 21 (MAPAAAPSSLAVRASSPAATP).

This chain is Small integral membrane protein 10-like protein 1, found in Homo sapiens (Human).